The sequence spans 351 residues: Fe(3+) ions import ATP-binding protein FbpC (351 aa).

Residues 7–237 (VELKNVTKRF…PASEFMASFM (231 aa)) form the ABC transporter domain. 39-46 (GPSGCGKT) is an ATP binding site.

This sequence belongs to the ABC transporter superfamily. Fe(3+) ion importer (TC 3.A.1.10) family. In terms of assembly, the complex is composed of two ATP-binding proteins (FbpC), two transmembrane proteins (FbpB) and a solute-binding protein (FbpA).

It localises to the cell inner membrane. The catalysed reaction is Fe(3+)(out) + ATP + H2O = Fe(3+)(in) + ADP + phosphate + H(+). Its function is as follows. Part of the ABC transporter complex FbpABC involved in Fe(3+) ions import. Responsible for energy coupling to the transport system. The sequence is that of Fe(3+) ions import ATP-binding protein FbpC from Photorhabdus laumondii subsp. laumondii (strain DSM 15139 / CIP 105565 / TT01) (Photorhabdus luminescens subsp. laumondii).